The primary structure comprises 426 residues: Bifunctional protein GlmU (426 aa).

The pyrophosphorylase stretch occupies residues 1 to 216; that stretch reads MSEVDVVILA…WHDILGVNTQ (216 aa). UDP-N-acetyl-alpha-D-glucosamine-binding positions include 9–12, lysine 23, and glutamine 69; that span reads LAAG. Aspartate 97 contributes to the Mg(2+) binding site. Residues glycine 132, glutamate 148, asparagine 163, and asparagine 214 each contribute to the UDP-N-acetyl-alpha-D-glucosamine site. Asparagine 214 contributes to the Mg(2+) binding site. The segment at 217–237 is linker; that stretch reads QQLAAVSKIARKRINDQIMAN. An N-acetyltransferase region spans residues 238–426; the sequence is GVTMIDPLTT…AKHDQRDDQP (189 aa). UDP-N-acetyl-alpha-D-glucosamine-binding residues include arginine 286 and lysine 304. Catalysis depends on histidine 316, which acts as the Proton acceptor. UDP-N-acetyl-alpha-D-glucosamine contacts are provided by tyrosine 319 and asparagine 330. Acetyl-CoA is bound by residues alanine 333, 339-340, serine 358, alanine 376, and arginine 393; that span reads NY.

It in the N-terminal section; belongs to the N-acetylglucosamine-1-phosphate uridyltransferase family. This sequence in the C-terminal section; belongs to the transferase hexapeptide repeat family. Homotrimer. The cofactor is Mg(2+).

Its subcellular location is the cytoplasm. It catalyses the reaction alpha-D-glucosamine 1-phosphate + acetyl-CoA = N-acetyl-alpha-D-glucosamine 1-phosphate + CoA + H(+). The catalysed reaction is N-acetyl-alpha-D-glucosamine 1-phosphate + UTP + H(+) = UDP-N-acetyl-alpha-D-glucosamine + diphosphate. It participates in nucleotide-sugar biosynthesis; UDP-N-acetyl-alpha-D-glucosamine biosynthesis; N-acetyl-alpha-D-glucosamine 1-phosphate from alpha-D-glucosamine 6-phosphate (route II): step 2/2. It functions in the pathway nucleotide-sugar biosynthesis; UDP-N-acetyl-alpha-D-glucosamine biosynthesis; UDP-N-acetyl-alpha-D-glucosamine from N-acetyl-alpha-D-glucosamine 1-phosphate: step 1/1. Its pathway is bacterial outer membrane biogenesis; LPS lipid A biosynthesis. Functionally, catalyzes the last two sequential reactions in the de novo biosynthetic pathway for UDP-N-acetylglucosamine (UDP-GlcNAc). The C-terminal domain catalyzes the transfer of acetyl group from acetyl coenzyme A to glucosamine-1-phosphate (GlcN-1-P) to produce N-acetylglucosamine-1-phosphate (GlcNAc-1-P), which is converted into UDP-GlcNAc by the transfer of uridine 5-monophosphate (from uridine 5-triphosphate), a reaction catalyzed by the N-terminal domain. The sequence is that of Bifunctional protein GlmU from Oenococcus oeni (strain ATCC BAA-331 / PSU-1).